The primary structure comprises 66 residues: UPF0434 protein Jann_0424 (66 aa).

It belongs to the UPF0434 family.

This is UPF0434 protein Jann_0424 from Jannaschia sp. (strain CCS1).